The primary structure comprises 235 residues: Zorya protein ZorB (235 aa).

Residues 25 to 44 (LMAGLMMVFMFISIAYMHYV) form a helical membrane-spanning segment. In terms of domain architecture, OmpA-like spans 87–225 (QTLEVRFKSP…RVTFKVVTNA (139 aa)).

The protein belongs to the MotB family.

It is found in the cell inner membrane. Functionally, component of antiviral defense system Zorya type II, composed of ZorA, ZorB and ZorE. Expression of Zorya type II in E.coli (strain MG1655) confers resistance to phages SECphi7 and T7. While most T7 infected Zorya-containing cells undergo abortive infection, a minority produce viable phage progeny. These eventually accumulate to a high multiplicity of infection, leading to culture collapse by 170 minutes after initial infection. ZorA and ZorB probably assemble in the cell inner membrane and exert their effect there. The polypeptide is Zorya protein ZorB (Escherichia coli (strain ATCC 8739 / DSM 1576 / NBRC 3972 / NCIMB 8545 / WDCM 00012 / Crooks)).